Reading from the N-terminus, the 217-residue chain is Large ribosomal subunit protein uL1 (217 aa).

The protein belongs to the universal ribosomal protein uL1 family. Component of the large ribosomal subunit.

Its subcellular location is the cytoplasm. Its function is as follows. Component of the large ribosomal subunit. The ribosome is a large ribonucleoprotein complex responsible for the synthesis of proteins in the cell. The chain is Large ribosomal subunit protein uL1 (rpl10a) from Xenopus laevis (African clawed frog).